Reading from the N-terminus, the 490-residue chain is Limb region 1 protein homolog (490 aa).

At 1–19 the chain is on the extracellular side; the sequence is MEGQDEVSAREQHFHSQVR. The chain crosses the membrane as a helical span at residues 20–40; that stretch reads ESTICFLLFAILYVVSYFIIT. Topologically, residues 41 to 62 are cytoplasmic; that stretch reads RYKRKSDEQEDEDAIVNRISLF. Residues 63–83 traverse the membrane as a helical segment; the sequence is LSTFTLAVSAGAVLLLPFSII. Topologically, residues 84 to 110 are extracellular; that stretch reads SNEILLSFPQNYYIQWLNGSLIHGLWN. The helical transmembrane segment at 111 to 131 threads the bilayer; the sequence is LASLFSNLCLFVLMPFAFFFL. Residues 132–151 lie on the Cytoplasmic side of the membrane; that stretch reads ESEGFAGLKKGIRARILETL. The chain crosses the membrane as a helical span at residues 152-172; that stretch reads VMLLLLALLILGIVWVASALI. The Extracellular portion of the chain corresponds to 173–187; that stretch reads DNDAASMESLYDLWE. A helical transmembrane segment spans residues 188–208; the sequence is FYLPYLYSCISLMGCLLLLLC. Over 209–291 the chain is Cytoplasmic; it reads TPVGLSRMFT…RKKASAWERN (83 aa). A coiled-coil region spans residues 250 to 287; that stretch reads RLNGLSSSVEYNIMELEQELENVKTLKTKLERRKKASA. Residues 292–312 form a helical membrane-spanning segment; it reads LVYPAVMVLLLIETSISVLLV. The Extracellular portion of the chain corresponds to 313–339; the sequence is ACNILCLLVDETAMPKGTRGPGIGNAS. Residues 340–360 form a helical membrane-spanning segment; it reads LSTFGFVGAALEIILIFYLMV. The Cytoplasmic segment spans residues 361 to 383; it reads SSVVGFYSLRFFGNFTPKKDDTT. A helical membrane pass occupies residues 384–404; sequence MTKIIGNCVSILVLSSALPVM. Over 405 to 426 the chain is Extracellular; sequence SRTLGITRFDLLGDFGRFNWLG. Residues 427–447 traverse the membrane as a helical segment; the sequence is NFYIVLSYNLLFAIVTTLCLV. The Cytoplasmic segment spans residues 448–490; the sequence is RKFTSAVREELFKALGLHKLHLPNTSRDSETAKPSVNGHQKAL.

This sequence belongs to the LIMR family. In terms of tissue distribution, widely expressed with strongest expression in heart and pancreas.

Its subcellular location is the membrane. Its function is as follows. Putative membrane receptor. The polypeptide is Limb region 1 protein homolog (LMBR1) (Homo sapiens (Human)).